Here is a 144-residue protein sequence, read N- to C-terminus: MLVPKRVKHRREFRGKMRGAAKGGRNVDFGEYGLEALESHWITNRQIEAARVAMTRYMKRGGKVWIRIFPHKSYTSKGVGVRMGNGKGAPTGWVAVVKREKIMFEVGGVSEAVAKEALRLASNKLPIRTKIVSREEVGGQSNEG.

This sequence belongs to the universal ribosomal protein uL16 family. In terms of assembly, part of the 50S ribosomal subunit.

Functionally, binds 23S rRNA and is also seen to make contacts with the A and possibly P site tRNAs. This chain is Large ribosomal subunit protein uL16, found in Lacticaseibacillus paracasei (strain ATCC 334 / BCRC 17002 / CCUG 31169 / CIP 107868 / KCTC 3260 / NRRL B-441) (Lactobacillus paracasei).